Here is a 497-residue protein sequence, read N- to C-terminus: Glutamyl-tRNA(Gln) amidotransferase subunit A (497 aa).

Active-site charge relay system residues include lysine 75 and serine 150. Serine 174 serves as the catalytic Acyl-ester intermediate.

This sequence belongs to the amidase family. GatA subfamily. In terms of assembly, heterotrimer of A, B and C subunits.

It carries out the reaction L-glutamyl-tRNA(Gln) + L-glutamine + ATP + H2O = L-glutaminyl-tRNA(Gln) + L-glutamate + ADP + phosphate + H(+). Functionally, allows the formation of correctly charged Gln-tRNA(Gln) through the transamidation of misacylated Glu-tRNA(Gln) in organisms which lack glutaminyl-tRNA synthetase. The reaction takes place in the presence of glutamine and ATP through an activated gamma-phospho-Glu-tRNA(Gln). The sequence is that of Glutamyl-tRNA(Gln) amidotransferase subunit A from Paraburkholderia phymatum (strain DSM 17167 / CIP 108236 / LMG 21445 / STM815) (Burkholderia phymatum).